Here is a 606-residue protein sequence, read N- to C-terminus: MGYVINIQAIKKQIELSPQSCGVYQMIGDKDKVLYVGKAKNLKSRLSNYLRYENLSERTKFMLSQVIKVEVLVTENEIDALLLEARLIKSLKPPYNIIFKDGRSYPYIVISKHNYPRIAQYRGKFKKGEFHYYGPFISVAAVKQTMLSLQKTFLLRVCSDQYFASTKRPCIEYQIKRCSAPCVGKITKDDYCQSVKQTRDTLLGRNEKVKKQLSSTMEKCSKEENYELAAIYRDRLKFLEQIQMQSMDFSFEKDADFFGIARKEDLACIGVLSFRNKDNYGSTPYFVENCSDHPDDEILSTFLIKLYNSANIPPAQIYVSDFVTGKEIIEQALHNVTHKPIKALHAKSKKEHNLLKFVYDNSQRSLEQKLTDYKNNLEKFEELSKIFLLPNIPKRVEVYDNSHTSGNQQVGVMVVAGKEGFLKSEYRKFTIKGEILGDDYEMMREVLTRRFSNNTKDVVPDFLLIDGGPGHISVVQNVLNTLNINVPFACMAKGSYRNAGNERFYMPNREDFTLKNDSKVMLYLQSLRNEAHRFAITSHRKKRDKQFFVSPLSKITSIGDKRKNALMSHFGSVENISKASLAEIQNVARISKELAEVILKHVDNKE.

The region spanning 19 to 97 (QSCGVYQMIG…IKSLKPPYNI (79 aa)) is the GIY-YIG domain. Positions 207–242 (EKVKKQLSSTMEKCSKEENYELAAIYRDRLKFLEQI) constitute a UVR domain.

The protein belongs to the UvrC family. As to quaternary structure, interacts with UvrB in an incision complex.

It is found in the cytoplasm. The UvrABC repair system catalyzes the recognition and processing of DNA lesions. UvrC both incises the 5' and 3' sides of the lesion. The N-terminal half is responsible for the 3' incision and the C-terminal half is responsible for the 5' incision. This is UvrABC system protein C from Wolbachia sp. subsp. Brugia malayi (strain TRS).